Here is a 119-residue protein sequence, read N- to C-terminus: Small ribosomal subunit protein bS16 (119 aa).

Basic residues predominate over residues 96-107; that stretch reads RKKRRAYRQRRS. The tract at residues 96 to 119 is disordered; sequence RKKRRAYRQRRSTQREEAAKDATK. The span at 108–119 shows a compositional bias: basic and acidic residues; that stretch reads TQREEAAKDATK.

It belongs to the bacterial ribosomal protein bS16 family.

The polypeptide is Small ribosomal subunit protein bS16 (Chlamydia pneumoniae (Chlamydophila pneumoniae)).